The chain runs to 135 residues: Large ribosomal subunit protein uL15 (135 aa).

A disordered region spans residues 21–66 (VGRGQGSGMGKTATRGGKGQTARTGYKAKRGFEGGQQPLQRRLPKI).

It belongs to the universal ribosomal protein uL15 family. As to quaternary structure, part of the 50S ribosomal subunit.

Functionally, binds to the 23S rRNA. The protein is Large ribosomal subunit protein uL15 of Helicobacter pylori (strain HPAG1).